The sequence spans 869 residues: Protein translocase subunit SecA (869 aa).

Residues glutamine 85, glycine 103 to threonine 107, and aspartate 508 each bind ATP.

This sequence belongs to the SecA family. In terms of assembly, monomer and homodimer. Part of the essential Sec protein translocation apparatus which comprises SecA, SecYEG and auxiliary proteins SecDF. Other proteins may also be involved.

It localises to the cell membrane. Its subcellular location is the cytoplasm. It carries out the reaction ATP + H2O + cellular proteinSide 1 = ADP + phosphate + cellular proteinSide 2.. Part of the Sec protein translocase complex. Interacts with the SecYEG preprotein conducting channel. Has a central role in coupling the hydrolysis of ATP to the transfer of proteins into and across the cell membrane, serving as an ATP-driven molecular motor driving the stepwise translocation of polypeptide chains across the membrane. This chain is Protein translocase subunit SecA, found in Deinococcus geothermalis (strain DSM 11300 / CIP 105573 / AG-3a).